A 376-amino-acid polypeptide reads, in one-letter code: MSTDVTQLAMALIARPSVTPLDEGCQTLMGKHLSAAGFTLEPMVFEDTTNLWARRGTQAPVFCFAGHTDVVPIGDLARWHTPPFEPTIIDGYLHGRGAADMKGSLAAMLVATERFVAKHPHHNGSIAYLITSDEEGPFINGTTRVIDTLEARNEKITWALVGEPSSTYKLGDVVKNGRRGSLTGNLTVNGVQGHVAYPHLADNPIHKAAPALTELAQMHWDNGNEFFPPTSFQIANINGGTGASNVIPGNLEVMFNFRYSTEVTADELIARVLGILDAHGLDYDISWVFNGLPFLTGDGPLLEATKSAIREVTGYDTDPQTTGGTSDGRFIAPTGAQVIELGPVNATIHKVNECVKIADLEQLALCYEKLLEKLLC.

Residue His67 coordinates Zn(2+). Residue Asp69 is part of the active site. A Zn(2+)-binding site is contributed by Asp100. Glu134 serves as the catalytic Proton acceptor. The Zn(2+) site is built by Glu135, Glu163, and His349.

Belongs to the peptidase M20A family. DapE subfamily. In terms of assembly, homodimer. Zn(2+) serves as cofactor. It depends on Co(2+) as a cofactor.

It carries out the reaction N-succinyl-(2S,6S)-2,6-diaminopimelate + H2O = (2S,6S)-2,6-diaminopimelate + succinate. Its pathway is amino-acid biosynthesis; L-lysine biosynthesis via DAP pathway; LL-2,6-diaminopimelate from (S)-tetrahydrodipicolinate (succinylase route): step 3/3. Catalyzes the hydrolysis of N-succinyl-L,L-diaminopimelic acid (SDAP), forming succinate and LL-2,6-diaminopimelate (DAP), an intermediate involved in the bacterial biosynthesis of lysine and meso-diaminopimelic acid, an essential component of bacterial cell walls. This chain is Succinyl-diaminopimelate desuccinylase, found in Shewanella denitrificans (strain OS217 / ATCC BAA-1090 / DSM 15013).